The sequence spans 61 residues: MQKKLLEIIVCPFCYTRLFMNDTETELICNIENISFPLKQGIPVLLKNQIRYLNCKIIDNQ.

Belongs to the UPF0434 family.

This chain is UPF0434 protein Bfl377, found in Blochmanniella floridana.